A 485-amino-acid chain; its full sequence is Cys-Gly metallodipeptidase DUG1 (485 aa).

Histidine 109 is a Zn(2+) binding site. Residue aspartate 111 is part of the active site. Aspartate 144 is a binding site for Zn(2+). Catalysis depends on glutamate 178, which acts as the Proton acceptor. Zn(2+) contacts are provided by glutamate 179, aspartate 207, and histidine 457.

Belongs to the peptidase M20A family. As to quaternary structure, homodimer. Component of the GSH degradosomal complex. Zn(2+) is required as a cofactor. The cofactor is Mn(2+).

The protein resides in the cytoplasm. Its function is as follows. Catalytic component of the GSH degradosomal complex involved in the degradation of glutathione (GSH) and other peptides containing a gamma-glu-X bond. Also functions as a dipeptidase with high specificity for Cys-Gly and no activity toward tri- or tetrapeptides. The polypeptide is Cys-Gly metallodipeptidase DUG1 (DUG1) (Candida albicans (strain SC5314 / ATCC MYA-2876) (Yeast)).